Here is a 551-residue protein sequence, read N- to C-terminus: Seed biotin-containing protein SBP65 (551 aa).

Over residues 1–20 the composition is skewed to basic and acidic residues; the sequence is MASEQLSRRENITTERKIQN. Positions 1–29 are disordered; sequence MASEQLSRRENITTERKIQNAEDSVPQRT. Residue Lys-103 is modified to N6-biotinyllysine; atypical. Residues 141–211 adopt a coiled-coil conformation; sequence KGQVVEERER…RNTTQAAQEK (71 aa). 2 disordered regions span residues 197 to 265 and 518 to 551; these read TNET…YEAT and DEVE…NNVS. Over residues 206–219 the composition is skewed to low complexity; that stretch reads QAAQEKGEAAQAKD. Composition is skewed to polar residues over residues 223-242 and 250-265; these read EKTQ…SART and AKNT…YEAT. The span at 533–544 shows a compositional bias: basic and acidic residues; the sequence is HSLDRAKHEGYR.

The protein belongs to the seed biotin-containing protein SBP65 family. As to expression, expressed in dry mature seeds.

Its function is as follows. May serve as a biotin source for several growth-limiting enzymes that are necessary during seed development and the subsequent germination stages, and thus may play some roles in determining seed germination capacity. This chain is Seed biotin-containing protein SBP65 (SBP65), found in Pisum sativum (Garden pea).